A 104-amino-acid polypeptide reads, in one-letter code: MAVIADPETAQGFRLAGLEGYGASSAEEAQSLLETLVERGGYALVAVDEALLPDPERAVERLMRGRDLPVLLPIAGLKEAFQGHDVEGYMRELVRKTIGFDIKL.

This sequence belongs to the V-ATPase F subunit family.

Functionally, produces ATP from ADP in the presence of a proton gradient across the membrane. This chain is V-type ATP synthase subunit F (atpF), found in Thermus thermophilus (strain ATCC 27634 / DSM 579 / HB8).